The following is a 1141-amino-acid chain: Serine-aspartate repeat-containing protein E (1141 aa).

An N-terminal signal peptide occupies residues 1 to 52 (MINRDNKKAITKKGMISNRLNKFSIRKYTVGTASILVGTTLIFGLGNQEAKA). The YSIRK-G/S signaling motif signature appears at 23 to 34 (FSIRKYTVGTAS). The interval 53–601 (AENTSTENAK…GDGTVKPEEK (549 aa)) is ligand binding A region. A disordered region spans residues 54-248 (ENTSTENAKQ…RSTKPVATAP (195 aa)). The segment covering 61 to 75 (AKQDDATTSDNKEVV) has biased composition (basic and acidic residues). Residues 77–90 (ETENNSTTENDSTN) are compositionally biased toward low complexity. Positions 92–108 (IKKETNTDSQPEAKEES) are enriched in basic and acidic residues. The span at 109 to 126 (TTSSTQQQQNNVTATTET) shows a compositional bias: low complexity. The span at 130 to 145 (NIEKENVKPSTDKTAT) shows a compositional bias: basic and acidic residues. The segment covering 159 to 207 (NYTNNDVTTKPSTSEIQTKPTTPQESTNIENSQPQPTPSKVDNQVTDAT) has biased composition (polar residues). Basic and acidic residues predominate over residues 216 to 241 (SKEELKNNPEKLKELVRNDNNTDRST). 3 consecutive CNA-B domains span residues 602 to 714 (LYKI…YKEP), 715 to 824 (KYNL…YKTP), and 825 to 935 (KYSL…EEDT). Residues 899–1117 (VTNTTEDDKD…GSENNGSNNA (219 aa)) are disordered. Acidic residues-rich tracts occupy residues 903–913 (TEDDKDADGGE) and 930–1080 (YFEE…DSDS). The LPXTG sorting signal motif lies at 1104–1108 (LPETG). Threonine 1107 is modified (pentaglycyl murein peptidoglycan amidated threonine). A propeptide spans 1108–1141 (GSENNGSNNATLFGGLFAALGSLLLFGRRKKQNK) (removed by sortase).

It belongs to the serine-aspartate repeat-containing protein (SDr) family. Interacts with host complement factor H/CFAH (via C-terminus). Interacts with host complement regulator C4BPA.

It localises to the secreted. Its subcellular location is the cell wall. Functionally, cell surface-associated calcium-binding protein which plays an important role in adhesion and pathogenesis. Contributes to the resistance to killing by innate immune components in blood and thus attenuates bacterial clearance by interacting with host complement factor H/CFAH and modulating its activity. Also inhibits bacterial opsonization and killing by interacting with host complement regulator C4BPA and thus inhibiting classical complement pathway activation. The polypeptide is Serine-aspartate repeat-containing protein E (sdrE) (Staphylococcus aureus (strain N315)).